A 709-amino-acid chain; its full sequence is Tyrosine-protein phosphatase cdc-14 (709 aa).

The 159-residue stretch at 196–354 (DFNWIIPGKI…QKFCWSLSQS (159 aa)) folds into the Tyrosine-protein phosphatase domain. Catalysis depends on cysteine 295, which acts as the Phosphocysteine intermediate. Positions 366–371 (KRNVRR) match the Nuclear localization signal motif. The Nuclear export signal motif lies at 372 to 381 (LVNQVDDINL). Disordered regions lie at residues 403-541 (VQVQ…LTRT), 573-594 (RYLS…GTSP), and 628-661 (ESKP…PYPS). Positions 404–413 (QVQNGRSTAP) are enriched in polar residues. Low complexity predominate over residues 463-479 (TTSPNSSSSRRFVKSST). Polar residues-rich tracts occupy residues 480-490 (PQMTVPSQAYL) and 501-521 (PSKN…TPNG). Positions 526-541 (RTRNSSGNTTSTLTRT) are enriched in low complexity. Residues 639 to 649 (PGTSKSTSSLK) show a composition bias toward polar residues.

It belongs to the protein-tyrosine phosphatase family. Non-receptor class CDC14 subfamily.

It is found in the cytoplasm. It localises to the cytoskeleton. Its subcellular location is the microtubule organizing center. The protein resides in the centrosome. The protein localises to the spindle. It is found in the midbody. It localises to the nucleus. The catalysed reaction is O-phospho-L-tyrosyl-[protein] + H2O = L-tyrosyl-[protein] + phosphate. Its activity is regulated as follows. Inhibited by sodium orthovanadate. Weakly inhibited by sodium fluoride and okadaic acid. Functionally, protein phosphatase that negatively regulates the G1-to-S phase transition to inhibit the cell cycle and establish quiescence in cells of multiple lineages including vulval, hypodermal and intestinal. Promotes nuclear accumulation and activity of the cyclin-dependent kinase inhibitor cki-1 which leads to inhibition of G1 progression during vulval tissue development. Has been shown to not be required for cytokinesis. However, in the embryo, in a contrasting study, has been shown to act as a regulator of central spindle formation and cytokinesis, and may be required for localization of the spindle component zen-4, and its interacting partner air-2 at the spindle during late cell divisions. Its function is as follows. Main regulator of cell cycle arrest in vulval precursor cells. The chain is Tyrosine-protein phosphatase cdc-14 from Caenorhabditis elegans.